A 169-amino-acid chain; its full sequence is MLATRCKCNLPSRSFVAPARSVRTRALHVEGRFGGGRGGNVIDRPDVDVSKRLGGFDLSDWNIPSWDAKTDNGNNGSNTDKDKKSPPGGGNYRVLLLDSPQHTEKGVVAAITRVVPGTNPDHARNCFATSKQLGMAIITTALKEHAELYREQLFTYRVRTALEPDNSTV.

A chloroplast-targeting transit peptide spans methionine 1–phenylalanine 33. Residues aspartate 67–tyrosine 92 form a disordered region.

It belongs to the ClpS family.

It is found in the plastid. It localises to the chloroplast stroma. Small adapter protein that modulate the activity of plastid Clp protease system (CLPC). Probably involved in substrate selection for plastid CLPC. This Chlamydomonas reinhardtii (Chlamydomonas smithii) protein is ATP-dependent Clp protease adapter protein CLPS2, chloroplastic.